The sequence spans 205 residues: High frequency lysogenization protein HflD homolog (205 aa).

It belongs to the HflD family.

The protein localises to the cytoplasm. It is found in the cell inner membrane. In Shewanella sp. (strain MR-4), this protein is High frequency lysogenization protein HflD homolog.